The sequence spans 639 residues: Eukaryotic translation initiation factor 2-alpha kinase 2 (639 aa).

Residues 171–588 (FEEYSLLGRG…LEVLNCGLLL (418 aa)) form the Protein kinase domain. ATP contacts are provided by residues 177–185 (LGRGGFGSV) and lysine 200. Over residues 298–320 (ISTSRKSSYSSTTESSNFENLES) the composition is skewed to low complexity. Residues 298-322 (ISTSRKSSYSSTTESSNFENLESPR) form a disordered region. The active-site Proton acceptor is the aspartate 417.

This sequence belongs to the protein kinase superfamily. Ser/Thr protein kinase family. GCN2 subfamily. Autophosphorylated.

The enzyme catalyses L-seryl-[protein] + ATP = O-phospho-L-seryl-[protein] + ADP + H(+). It carries out the reaction L-threonyl-[protein] + ATP = O-phospho-L-threonyl-[protein] + ADP + H(+). In terms of biological role, mediates down-regulation of protein synthesis in response to stress conditions by the phosphorylation of the alpha subunit of eIF-2 (tif211) on 'Ser-52'. Protein synthesis is inhibited at the level of initiation. Activity is inhibited in the presence of heme. In Schizosaccharomyces pombe (strain 972 / ATCC 24843) (Fission yeast), this protein is Eukaryotic translation initiation factor 2-alpha kinase 2 (hri2).